The following is a 451-amino-acid chain: MNQNKMLELINHLKNAGFVFQGSEIYGGVANTWDYGPLGVLLKDNILNYWKKFFVFSQNNIYMLDSKILLNSKVWEASGHVGNFNDPLIENKINNKRYRADKVIEELFPNENVAKMTHEQMQEFLQKNVTSYDNSKCAWSEIKKFNLMFETFQGVVDDKKKAIYLRPETAQGIFINFKNIQRAMRAKLPFGVAQVGKSFRNEVTPGNFIFRTREFEQMELEFFFDEETPNSYFDELVNKSYDFMLKLGLSKNNLKVRKHDQEELAHYSKATVDLEYNFPFGWGELMGIAHRGNFDLSTHSKFSNEKLEYLDPNTNKKLIPSVIEPSVGLDRLMLAILCEAYSEEKVSESDTRLVLKLDKKLSPYKVAILPLIKKFNPKANEIYSYLIDKNISVTFDESASIGKRYRRQDAIGTYYCLTVDEQSLEDNTVTLRDRDSMQQERINFKDILKFL.

Residues R99 and E168 each contribute to the substrate site. ATP contacts are provided by residues 200-202 (RNE), 210-215 (FRTREF), 284-285 (EL), and 328-331 (GLDR). 215–219 (FEQME) is a substrate binding site. Residue 324–328 (EPSVG) participates in substrate binding.

Belongs to the class-II aminoacyl-tRNA synthetase family. As to quaternary structure, homodimer.

The protein localises to the cytoplasm. The enzyme catalyses tRNA(Gly) + glycine + ATP = glycyl-tRNA(Gly) + AMP + diphosphate. Its function is as follows. Catalyzes the attachment of glycine to tRNA(Gly). The protein is Glycine--tRNA ligase of Mycoplasmopsis synoviae (strain 53) (Mycoplasma synoviae).